A 148-amino-acid polypeptide reads, in one-letter code: Protein ADM2 (148 aa).

The N-terminal stretch at 1-24 is a signal peptide; it reads MARIPTAALGCISLLCLQLPGSLS. Residues 25–98 constitute a propeptide that is removed on maturation; it reads RSLGGDPRPV…HSGPRRHSGP (74 aa). Disordered regions lie at residues 26 to 57 and 70 to 101; these read SLGGDPRPVKPREPPARSPSSSLQPRHPAPRP and RGAGLAPVMGQPLRDGGRQHSGPRRHSGPRRT. The cysteines at positions 110 and 115 are disulfide-linked. Tyr147 carries the tyrosine amide modification.

It belongs to the adrenomedullin family. Expressed in the esophagus, stomach, jejunum, ileum, ileocecum, ascending colon, transverse colon, descending colon and rectum. Expressed in myocardial cells of the heart, renal tubular cells, hypothalamus, and pituitary.

It is found in the secreted. Functionally, intermedin/ADM2 is a peptide hormone that plays a role as physiological regulator of gastrointestinal and cardiovascular bioactivities mediated by the CALCRL-RAMPs receptor complexes. Activates the cAMP-dependent pathway through interaction with CALCRL-RAMP3 receptor complex. This is Protein ADM2 from Homo sapiens (Human).